The following is a 179-amino-acid chain: Large ribosomal subunit protein uL5 (179 aa).

Belongs to the universal ribosomal protein uL5 family. As to quaternary structure, part of the 50S ribosomal subunit; part of the 5S rRNA/L5/L18/L25 subcomplex. Contacts the 5S rRNA and the P site tRNA. Forms a bridge to the 30S subunit in the 70S ribosome.

This is one of the proteins that bind and probably mediate the attachment of the 5S RNA into the large ribosomal subunit, where it forms part of the central protuberance. In the 70S ribosome it contacts protein S13 of the 30S subunit (bridge B1b), connecting the 2 subunits; this bridge is implicated in subunit movement. Contacts the P site tRNA; the 5S rRNA and some of its associated proteins might help stabilize positioning of ribosome-bound tRNAs. The protein is Large ribosomal subunit protein uL5 of Shewanella pealeana (strain ATCC 700345 / ANG-SQ1).